The following is a 734-amino-acid chain: DNA ligase (734 aa).

NAD(+) contacts are provided by residues 42-46, 91-92, and Glu-125; these read DAEYD and SL. Lys-127 (N6-AMP-lysine intermediate) is an active-site residue. NAD(+) is bound by residues Arg-148, Glu-185, Lys-301, and Lys-325. Zn(2+) contacts are provided by Cys-430, Cys-433, Cys-454, and Cys-460. In terms of domain architecture, BRCT spans 655–734; it reads SADSEVAGKT…DTWLQRVGKA (80 aa).

Belongs to the NAD-dependent DNA ligase family. LigA subfamily. It depends on Mg(2+) as a cofactor. Mn(2+) serves as cofactor.

The enzyme catalyses NAD(+) + (deoxyribonucleotide)n-3'-hydroxyl + 5'-phospho-(deoxyribonucleotide)m = (deoxyribonucleotide)n+m + AMP + beta-nicotinamide D-nucleotide.. In terms of biological role, DNA ligase that catalyzes the formation of phosphodiester linkages between 5'-phosphoryl and 3'-hydroxyl groups in double-stranded DNA using NAD as a coenzyme and as the energy source for the reaction. It is essential for DNA replication and repair of damaged DNA. This chain is DNA ligase, found in Mesorhizobium japonicum (strain LMG 29417 / CECT 9101 / MAFF 303099) (Mesorhizobium loti (strain MAFF 303099)).